The sequence spans 163 residues: LHHSKHHATYVKGANDAVAKLEEARAKEDHSAILLNEKNLAFNLAGHVNHTIWWKNLSPNGGDKPTGELAAAIDEAFGSFDKFRAQFHAAATTVQGSGWAALGWDTLGNKLLIFQVYDHQTNFPLGIIPLLLLDMWEHAFYLQYKNVKVDFAKAFWNVVNWDD.

4 residues coordinate Mn(2+): His2, His50, Asp134, and His138.

The protein belongs to the iron/manganese superoxide dismutase family. The cofactor is Mn(2+).

It catalyses the reaction 2 superoxide + 2 H(+) = H2O2 + O2. Destroys superoxide anion radicals which are normally produced within the cells and which are toxic to biological systems. This is Superoxide dismutase [Mn] (sodA) from Mycobacterium kansasii.